The primary structure comprises 225 residues: Enolase-phosphatase E1 (225 aa).

This sequence belongs to the HAD-like hydrolase superfamily. MasA/MtnC family. Monomer. Requires Mg(2+) as cofactor.

It carries out the reaction 5-methylsulfanyl-2,3-dioxopentyl phosphate + H2O = 1,2-dihydroxy-5-(methylsulfanyl)pent-1-en-3-one + phosphate. The protein operates within amino-acid biosynthesis; L-methionine biosynthesis via salvage pathway; L-methionine from S-methyl-5-thio-alpha-D-ribose 1-phosphate: step 3/6. Its pathway is amino-acid biosynthesis; L-methionine biosynthesis via salvage pathway; L-methionine from S-methyl-5-thio-alpha-D-ribose 1-phosphate: step 4/6. Functionally, bifunctional enzyme that catalyzes the enolization of 2,3-diketo-5-methylthiopentyl-1-phosphate (DK-MTP-1-P) into the intermediate 2-hydroxy-3-keto-5-methylthiopentenyl-1-phosphate (HK-MTPenyl-1-P), which is then dephosphorylated to form the acireductone 1,2-dihydroxy-3-keto-5-methylthiopentene (DHK-MTPene). The sequence is that of Enolase-phosphatase E1 from Pseudomonas aeruginosa (strain LESB58).